The primary structure comprises 268 residues: MHHTTKKKYGQNFLTDVNLLNKIVTKASITDKNVLEIGPGKGALTKIIVPQAKHVLAYEIDATLKPFLNFENHNNVNIIYDDFLKRDLLKDFDHYFSPNSQLSLIGNLPYYITSPILFKIIDTPQINDATIMIQKEVGMRLLAQPNNKNYNALSVIIQFLFSIEKIQEVKRHMFFPAPKVDSIVIKLTKNNNICPTFLQQFIKFVKASFKQKRKTLLNNLSCQFLLSKETIIPFFLQHHIPLQIRAEQVTLETFQKLTVKWFIFFNIS.

The S-adenosyl-L-methionine site is built by Asn-12, Leu-14, Gly-38, Glu-59, Asp-82, and Asn-107.

The protein belongs to the class I-like SAM-binding methyltransferase superfamily. rRNA adenine N(6)-methyltransferase family. RsmA subfamily.

The protein localises to the cytoplasm. It catalyses the reaction adenosine(1518)/adenosine(1519) in 16S rRNA + 4 S-adenosyl-L-methionine = N(6)-dimethyladenosine(1518)/N(6)-dimethyladenosine(1519) in 16S rRNA + 4 S-adenosyl-L-homocysteine + 4 H(+). Its function is as follows. Specifically dimethylates two adjacent adenosines (A1518 and A1519) in the loop of a conserved hairpin near the 3'-end of 16S rRNA in the 30S particle. May play a critical role in biogenesis of 30S subunits. The protein is Ribosomal RNA small subunit methyltransferase A of Onion yellows phytoplasma (strain OY-M).